We begin with the raw amino-acid sequence, 284 residues long: Efem/EfeO family lipoprotein (284 aa).

The first 17 residues, 1–17 (MKKLTTLLLASTLLIAA), serve as a signal peptide directing secretion. Residue C18 is the site of N-palmitoyl cysteine attachment. A lipid anchor (S-diacylglycerol cysteine) is attached at C18.

Belongs to the EfeM/EfeO family.

The protein resides in the cell membrane. The polypeptide is Efem/EfeO family lipoprotein (Staphylococcus aureus (strain MRSA252)).